Consider the following 2070-residue polypeptide: HEAT repeat-containing protein 5B (2070 aa).

HEAT repeat units follow at residues 848–885 (EVRK…VVGE), 1062–1099 (VNLS…REAA), and 1290–1327 (LHLS…KFAS). Ser1737 is subject to Phosphoserine.

It belongs to the HEATR5 family. In terms of assembly, self-associates. Component of the aftiphilin/p200/gamma-synergin complex, at least composed of AFTPH/aftiphilin, HEATR5B/p200a and SYNRG/gamma-synergin, which plays a role in the AP1G1/AP-1-mediated protein trafficking from early to recycling endosomes and between the trans-Golgi network (TGN) and endosomes. Within the complex interacts with AFTPH/aftiphilin and SYNRG/gamma-synergin; the interactions are direct. Interacts with GGA1.

It is found in the cytoplasm. It localises to the perinuclear region. The protein resides in the cytoplasmic vesicle. Its subcellular location is the clathrin-coated vesicle. Component of clathrin-coated vesicles. Component of the aftiphilin/p200/gamma-synergin complex, which plays roles in AP1G1/AP-1-mediated protein trafficking including the trafficking of transferrin from early to recycling endosomes, and the membrane trafficking of furin and the lysosomal enzyme cathepsin D between the trans-Golgi network (TGN) and endosomes. In Mus musculus (Mouse), this protein is HEAT repeat-containing protein 5B (Heatr5b).